The primary structure comprises 236 residues: Syntaxin-8 (236 aa).

The Cytoplasmic portion of the chain corresponds to 1–215 (MAPDPWFSTY…LVDRKSTSCG (215 aa)). Residues 42–65 (LTIRTLLKNLKVKIDLLKDLLLRA) adopt a coiled-coil conformation. The t-SNARE coiled-coil homology domain occupies 145 to 207 (QKIIQEQDAG…RTEARRVTLV (63 aa)). Ser-160 bears the Phosphoserine mark. The chain crosses the membrane as a helical; Anchor for type IV membrane protein span at residues 216–232 (MIMVILLLLVAIVVVAV). Residues 233-236 (WPTN) are Vesicular-facing.

It belongs to the syntaxin family. In terms of assembly, forms a SNARE complex with STX7, VTI1B and VAMP8 which functions in the homotypic fusion of late endosomes. Part of the SNARE core complex containing STX7, VAMP8 and VTI1B. Interacts with VAMP8. Interacts with HECTD3. Interacts with TPC1. Ubiquitinated by HECTD3.

The protein resides in the membrane. Its function is as follows. Vesicle trafficking protein that functions in the early secretory pathway, possibly by mediating retrograde transport from cis-Golgi membranes to the ER. The chain is Syntaxin-8 (Stx8) from Mus musculus (Mouse).